A 105-amino-acid chain; its full sequence is Large ribosomal subunit protein uL18c (105 aa).

Belongs to the universal ribosomal protein uL18 family. Part of the 50S ribosomal subunit; contacts the 5S rRNA.

It localises to the plastid. The protein localises to the chloroplast. In terms of biological role, binds 5S rRNA, forms part of the central protuberance of the 50S subunit. The polypeptide is Large ribosomal subunit protein uL18c (rpl18) (Gracilaria tenuistipitata var. liui (Red alga)).